The following is a 128-amino-acid chain: Large ribosomal subunit protein eL22 (128 aa).

At Thr62 the chain carries Phosphothreonine. Ser66 is modified (phosphoserine). At Lys69 the chain carries N6-succinyllysine.

The protein belongs to the eukaryotic ribosomal protein eL22 family. As to quaternary structure, component of the large ribosomal subunit.

The protein localises to the cytoplasm. Functionally, component of the large ribosomal subunit. The ribosome is a large ribonucleoprotein complex responsible for the synthesis of proteins in the cell. The protein is Large ribosomal subunit protein eL22 (Rpl22) of Rattus norvegicus (Rat).